Here is a 474-residue protein sequence, read N- to C-terminus: MSIQAPPRLLELAGQSLLRDQALSISAMEELPRVLYLPLFREAFSRRHFQTLTVMVQAWPFTCLPLVSLMKTLHLEPLKALLEGLHMLLTQKDRPRRWKLQVLDLRDVDENFWARWPGAWALSCFPEAMSKRQTAEDCPRTGEHQPLKVFIDICLKEIPQDECLRYLFQWVYQRRGLVHLCCSKLVNYLTPIKYLRKSLKIIYINSIGELEIHNTCWPHLIRKLYCYLKEMKTLCKLVFSRCHHYTSDNELEGWLVTRFTSVFLRLEHLQLLKIKLITFFSGHLEQLIRCLQNPLENLELTCGNLLEEDLKCLSQFPSLGYLKHLNLSYVLLFRISLEPLGALLEKIAASLETLVLEGCQIHYSQLSAILPGLSCCSQLTTFYFGSNCMSIDALKDLLRHTSGLSKLSLETYPAPEESLNSLVRVNWEIFTPLRAELMCTLREFRQPKRIFIGPTPCPSCGSSPSEELELHLCC.

An LRR 1; degenerate repeat occupies 97–124 (RWKLQVLDLRDVDENFWARWPGAWALSC). The stretch at 179 to 203 (HLCCSKLVNYLTPIKYLRKSLKIIY) is one LRR 2; degenerate repeat. One copy of the LRR 3; degenerate repeat lies at 204 to 230 (INSIGELEIHNTCWPHLIRKLYCYLKE). An LRR 4; degenerate repeat occupies 231–265 (MKTLCKLVFSRCHHYTSDNELEGWLVTRFTSVFLR). LRR repeat units lie at residues 266-291 (LEHL…IRCL), 292-323 (QNPL…GYLK), 324-342 (HLNL…PLGA), 348-375 (AASL…GLSC), and 376-400 (CSQL…LLRH).

The protein belongs to the PRAME family.

The sequence is that of PRAME family member 2 from Homo sapiens (Human).